Consider the following 461-residue polypeptide: Probable Xaa-Pro aminopeptidase PEPP (461 aa).

4 residues coordinate Mn(2+): Asp-257, Asp-268, Glu-391, and Glu-431.

Belongs to the peptidase M24B family. It depends on Mn(2+) as a cofactor.

It catalyses the reaction Release of any N-terminal amino acid, including proline, that is linked to proline, even from a dipeptide or tripeptide.. Catalyzes the removal of a penultimate prolyl residue from the N-termini of peptides. In Colletotrichum graminicola (strain M1.001 / M2 / FGSC 10212) (Maize anthracnose fungus), this protein is Probable Xaa-Pro aminopeptidase PEPP (PEPP).